We begin with the raw amino-acid sequence, 301 residues long: Small ribosomal subunit biogenesis GTPase RsgA (301 aa).

Positions 65–224 (YNQLIRPKVA…LVDTPGFGNL (160 aa)) constitute a CP-type G domain. GTP-binding positions include 115–118 (SKYD) and 167–175 (GNSGVGKST). Cysteine 247, cysteine 252, histidine 254, and cysteine 260 together coordinate Zn(2+).

The protein belongs to the TRAFAC class YlqF/YawG GTPase family. RsgA subfamily. In terms of assembly, monomer. Associates with 30S ribosomal subunit, binds 16S rRNA. It depends on Zn(2+) as a cofactor.

It is found in the cytoplasm. In terms of biological role, one of several proteins that assist in the late maturation steps of the functional core of the 30S ribosomal subunit. Helps release RbfA from mature subunits. May play a role in the assembly of ribosomal proteins into the subunit. Circularly permuted GTPase that catalyzes slow GTP hydrolysis, GTPase activity is stimulated by the 30S ribosomal subunit. The sequence is that of Small ribosomal subunit biogenesis GTPase RsgA from Ureaplasma urealyticum serovar 10 (strain ATCC 33699 / Western).